Here is a 211-residue protein sequence, read N- to C-terminus: Degradation in the endoplasmic reticulum protein 1 (211 aa).

N-acetylmethionine is present on Met-1. The Cytoplasmic portion of the chain corresponds to 1-14; that stretch reads MDAVILNLLGDIPL. A helical transmembrane segment spans residues 15-32; it reads VTRLWTIGCLVLSGLTSL. The Lumenal portion of the chain corresponds to 33-67; sequence RIVDPGKVVYSYDLVFKKGQYGRLLYSIFDYGAFN. Residues 68-85 form a helical membrane-spanning segment; that stretch reads WISMINIFVSANHLSTLE. The Cytoplasmic portion of the chain corresponds to 86–92; the sequence is NSFNLRR. The helical transmembrane segment at 93-109 threads the bilayer; it reads KFCWIIFLLLVILVKMT. Over 110-117 the chain is Lumenal; that stretch reads SIEQPAAS. Residues 118 to 133 form a helical membrane-spanning segment; that stretch reads LGVLLHENLVYYELKK. The Cytoplasmic portion of the chain corresponds to 134–149; the sequence is NGNQMNVRFFGAIDVS. A helical transmembrane segment spans residues 150–165; the sequence is PSIFPIYMNAVMYFVY. The Lumenal segment spans residues 166 to 168; that stretch reads KRS. Residues 169–189 traverse the membrane as a helical segment; the sequence is WLEIAMNFMPGHVIYYMDDII. Over 190 to 211 the chain is Cytoplasmic; it reads GKIYGIDLCKSPYDWFRNTETP.

The protein belongs to the derlin family. As to quaternary structure, component of the HRD1 ubiquitin ligase complex which contains the E3 ligase HRD1, its cofactors HRD3, USA1 and DER1, substrate recruiting factor YOS9 and CDC48-binding protein UBX2. Within the complex, interacts with USA1 (via C-terminus). In ERAD-L, HRD3 and YOS9 jointly bind misfolded glycoproteins in the endoplasmic reticulum (ER) lumen. Movement of ERAD-L substrates through the ER membrane is facilitated by HRD1 and DER1 which have lateral gates facing each other and which distort the membrane region between the lateral gates, making it much thinner than a normal phospholipid bilayer. Substrates insert into the membrane as a hairpin loop with one strand interacting with DER1 and the other with HRD1. The HRD1 complex interacts with the heterotrimeric CDC48-NPL4-UFD1 ATPase complex which is recruited by UBX2 via its interaction with CDC48 and which moves ubiquitinated substrates to the cytosol for targeting to the proteasome. In terms of processing, N-terminally acetylated by acetyltransferase NatB which enhances DER1 stability and is required for ERAD-L function.

It is found in the endoplasmic reticulum membrane. Its function is as follows. Component of the endoplasmic reticulum-associated degradation (ERAD) pathway. Specifically required for the ERAD-L pathway which mediates the degradation of proteins with misfolded lumenal domains within the endoplasmic reticulum (ER). Facilitates retrotranslocation of misfolded proteins from the ER lumen through the ER membrane in conjunction with HRD1. Both proteins have lateral gates facing each other and distort the membrane region between the lateral gates, making it much thinner than a normal phospholipid bilayer. Substrates insert into the membrane as a hairpin loop with one strand interacting with DER1 and the other with HRD1. The sequence is that of Degradation in the endoplasmic reticulum protein 1 (DER1) from Saccharomyces cerevisiae (strain ATCC 204508 / S288c) (Baker's yeast).